Here is a 64-residue protein sequence, read N- to C-terminus: Bacteriocin plantaricin ASM1 (64 aa).

The N-terminal stretch at M1–G21 is a signal peptide. The segment at residues S61 to C64 is a cross-link (lanthionine (Ser-Cys)).

Contains 2 disulfide bonds.

The protein localises to the secreted. Bacteriocin with a narrow antibacterial spectrum. Antibacterial activity against the Gram-positive bacteria L.plantarun, L.pentosus, L.curvatus, L.lindneri, L.mesenteroides and E.faecilis. Lacks antibacterial activity against the Gram-positive bacteria L.brevis, L.sakei, L.lactis, P.acidilactici, B.subtilis, B.cereus, L.monocytogenes and S.aureus, and against the Gram-negative bacteria E.coli and S.typhimurium. The chain is Bacteriocin plantaricin ASM1 from Lactiplantibacillus plantarum (Lactobacillus plantarum).